The chain runs to 188 residues: Elongation factor P (188 aa).

Lysine 34 bears the N6-(3,6-diaminohexanoyl)-5-hydroxylysine mark.

The protein belongs to the elongation factor P family. Post-translationally, may be beta-lysylated on the epsilon-amino group of Lys-34 by the combined action of EpmA and EpmB, and then hydroxylated on the C5 position of the same residue by EpmC (if this protein is present). Lysylation is critical for the stimulatory effect of EF-P on peptide-bond formation. The lysylation moiety may extend toward the peptidyltransferase center and stabilize the terminal 3-CCA end of the tRNA. Hydroxylation of the C5 position on Lys-34 may allow additional potential stabilizing hydrogen-bond interactions with the P-tRNA.

It is found in the cytoplasm. It participates in protein biosynthesis; polypeptide chain elongation. Functionally, involved in peptide bond synthesis. Alleviates ribosome stalling that occurs when 3 or more consecutive Pro residues or the sequence PPG is present in a protein, possibly by augmenting the peptidyl transferase activity of the ribosome. Modification of Lys-34 is required for alleviation. This chain is Elongation factor P, found in Pectobacterium atrosepticum (strain SCRI 1043 / ATCC BAA-672) (Erwinia carotovora subsp. atroseptica).